The primary structure comprises 84 residues: Small ribosomal subunit protein uS17 (84 aa).

Belongs to the universal ribosomal protein uS17 family. As to quaternary structure, part of the 30S ribosomal subunit.

In terms of biological role, one of the primary rRNA binding proteins, it binds specifically to the 5'-end of 16S ribosomal RNA. The chain is Small ribosomal subunit protein uS17 from Yersinia enterocolitica serotype O:8 / biotype 1B (strain NCTC 13174 / 8081).